Here is a 227-residue protein sequence, read N- to C-terminus: Phosphoglycolate phosphatase (227 aa).

The Nucleophile role is filled by aspartate 8. Mg(2+) contacts are provided by aspartate 8 and aspartate 10. Substrate is bound at residue lysine 150. Aspartate 173 and aspartate 177 together coordinate Mg(2+).

Belongs to the archaeal SPP-like hydrolase family. Mg(2+) is required as a cofactor.

It carries out the reaction 2-phosphoglycolate + H2O = glycolate + phosphate. Its function is as follows. Catalyzes the dephosphorylation of 2-phosphoglycolate. This chain is Phosphoglycolate phosphatase, found in Sulfolobus acidocaldarius (strain ATCC 33909 / DSM 639 / JCM 8929 / NBRC 15157 / NCIMB 11770).